The chain runs to 365 residues: Outer membrane lipoprotein A (365 aa).

Residues 1-19 form the signal peptide; it reads MNIATKLMASLVASVVLTA. The interval 19 to 121 is disordered; the sequence is ACSGGGSSGS…KGEELSKDKS (103 aa). Residue Cys20 is the site of N-palmitoyl cysteine attachment. Cys20 is lipidated: S-diacylglycerol cysteine. Composition is skewed to basic and acidic residues over residues 48–68 and 105–121; these read EQPKKEEVPQADNSKAEEPKE and NPQKDAPKGEELSKDKS.

It is found in the cell outer membrane. The protein is Outer membrane lipoprotein A (omlA) of Actinobacillus pleuropneumoniae (Haemophilus pleuropneumoniae).